The following is a 74-amino-acid chain: Serine rich endogenous peptide 23 (74 aa).

Residues 1 to 25 form the signal peptide; the sequence is MNKVVVYVLALSILLFFGLPNTTLA. Positions 52 to 66 match the SCOOP motif motif; that stretch reads KIAVGGSDSVRAHSK. The SxS motif essential for MIK2 binding signature appears at 58–60; it reads SDS.

Belongs to the serine rich endogenous peptide (SCOOP) phytocytokine family. Interacts with MIK2 (via extracellular leucine-rich repeat domain); this interaction triggers the formation of complex between MIK2 and the BAK1/SERK3 and SERK4 coreceptors, and subsequent BAK1 activation by phosphorylation. In terms of tissue distribution, mostly expressed in roots, and, to a lower extent, in seedlings shoots.

Its subcellular location is the cell membrane. It is found in the secreted. The protein resides in the extracellular space. The protein localises to the apoplast. Its function is as follows. Brassicaceae-specific phytocytokine (plant endogenous peptide released into the apoplast) perceived by MIK2 in a BAK1/SERK3 and SERK4 coreceptors-dependent manner, that modulates various physiological and antimicrobial processes including growth prevention and reactive oxygen species (ROS) response regulation. Inhibits root growth. This is Serine rich endogenous peptide 23 from Arabidopsis thaliana (Mouse-ear cress).